Consider the following 30-residue polypeptide: Nattererin-1 (30 aa).

Expressed by the skin glands.

Its subcellular location is the secreted. In terms of biological role, probably has antibacterial activity. The chain is Nattererin-1 from Physalaemus nattereri (Cuyaba dwarf frog).